The primary structure comprises 521 residues: MSDTEDLAALNDRLMAKNHALAEALNRAGKELTKAKSRLAQLAQPPLTFATMVKVDSTRTDADGIQHASAEVISGTRRMVVPVASNVNAARLTAGATVMLNEKLVLVEQRDADTVGQIRSVKQVLDDGRLIVTDASGNPVLIRRSGALAYADINQGDRIIVDPSVRLAIEALPAEGDKDLVLEETPDVTFADIGGLDSEIGRIRDAVQLPFRHRALFERYDLKPPKGVLLYGPPGNGKTMIAKAVANALCEGGYDSNGDGSISPAETRVKGVFLSVKGPELLNKYVGESERLIRLIFQRARERAADGNPVVVFIDEMDSLLRTRGSGVSSDVETTIVPQFLSELDGVESLDNVMVIGASNRVDMIDPAVLRPGRLDVKIRVGRPKTNQAIAIVDHYLTDDLPLENGVDAHALSAVLVHDIYGTSERRHLCDVQEENGQWHALFLADVVSGAMLKNIVDRAKTRAVKESIETGSDVALTVPLLAAAVEDEYRETRDSMADVDPEQWSRINGMDPIRRIRTAE.

Residues 4 to 44 (TEDLAALNDRLMAKNHALAEALNRAGKELTKAKSRLAQLAQ) adopt a coiled-coil conformation. 235-240 (GNGKTM) is a binding site for ATP.

Belongs to the AAA ATPase family. Homohexamer. Assembles into a hexameric ring structure.

The protein is AAA ATPase forming ring-shaped complexes of Bifidobacterium longum subsp. infantis (strain ATCC 15697 / DSM 20088 / JCM 1222 / NCTC 11817 / S12).